The following is a 255-amino-acid chain: MRHPLVMGNWKLNGNKQMVNELIAGLRTELSGVDGCGVAIAPPVMYLEQAKHAISGSPVALGAQNVDVNLSGAFTGEVSADMLKDIGAQYIIIGHSERRTWHAESDDAIAKKFAVLKQTGLIPVLCIGETEAENEAGKTEEVCARQIDAVLNTQGADAFKGVVIAYEPVWAIGTGKSATPAQAQAVHKFIRDHIAKKDATVAAQVIIQYGGSVNDKNAAELFAQPDIDGALVGGASLKADAFAAIVKAAAAAKKA.

9 to 11 (NWK) is a binding site for substrate. Histidine 95 serves as the catalytic Electrophile. The active-site Proton acceptor is the glutamate 167. Substrate contacts are provided by residues glycine 173, serine 212, and 233-234 (GG).

It belongs to the triosephosphate isomerase family. In terms of assembly, homodimer.

It localises to the cytoplasm. It carries out the reaction D-glyceraldehyde 3-phosphate = dihydroxyacetone phosphate. The protein operates within carbohydrate biosynthesis; gluconeogenesis. Its pathway is carbohydrate degradation; glycolysis; D-glyceraldehyde 3-phosphate from glycerone phosphate: step 1/1. Involved in the gluconeogenesis. Catalyzes stereospecifically the conversion of dihydroxyacetone phosphate (DHAP) to D-glyceraldehyde-3-phosphate (G3P). The polypeptide is Triosephosphate isomerase (Erwinia tasmaniensis (strain DSM 17950 / CFBP 7177 / CIP 109463 / NCPPB 4357 / Et1/99)).